The primary structure comprises 339 residues: Trace amine-associated receptor 2 (339 aa).

The Extracellular portion of the chain corresponds to 1 to 36; sequence MASFEAQQETFDCSEYGNGSCPENERSLGVRAAMYS. An N-linked (GlcNAc...) asparagine glycan is attached at N18. 2 cysteine pairs are disulfide-bonded: C21–C185 and C104–C189. Residues 37–57 form a helical membrane-spanning segment; the sequence is LMACAIFITIFGNLAMIISIS. Residues 58-67 are Cytoplasmic-facing; sequence YFKQLHTPTN. Residues 68–88 traverse the membrane as a helical segment; it reads LLILSMAVTDFLLGFTIMPYS. Residues 89–106 are Extracellular-facing; it reads MVRSVENCWYFGLTFCKI. The helical transmembrane segment at 107-127 threads the bilayer; the sequence is HYSFDLMLSITSIFHLCSVAV. Residues 128 to 150 are Cytoplasmic-facing; it reads DRFYAICHPLHYCTKMTIPVVRR. The chain crosses the membrane as a helical span at residues 151–171; the sequence is LLLVCWSVPGAFAFGVVFSEA. The Extracellular segment spans residues 172-195; sequence YADGIEGYDILVACSSSCPVMFNK. The helical transmembrane segment at 196 to 216 threads the bilayer; the sequence is LWGTTLFVAGFFTPSSMMVGI. Residues 217 to 251 are Cytoplasmic-facing; sequence YGKIFAVSKKHARVIDNLPENQNNQMRKDKKAAKT. A helical membrane pass occupies residues 252 to 272; the sequence is LGIVMGVFLLCWFPCFFTILL. Residues 273-287 are Extracellular-facing; that stretch reads DPFLNFSTPAVLFDA. N277 carries an N-linked (GlcNAc...) asparagine glycan. Residues 288-310 traverse the membrane as a helical segment; the sequence is LTWFGYFNSTCNPLIYGFFYPWF. The Cytoplasmic segment spans residues 311 to 339; the sequence is RRALKYILLGKIFSSHFHNTNLFTQKETE.

The protein belongs to the G-protein coupled receptor 1 family. As to expression, mainly expressed in neurons of the olfactory epithelium. Also present in the limbic brain areas receiving projection from the olfactory system and several brain regions, including the hippocampus, cerebellum, cortex, raphe nuclei, hypothalamus and habenula.

It is found in the cell membrane. Its function is as follows. Orphan olfactory receptor specific for trace amines. Trace amine compounds are enriched in animal body fluids and act on trace amine-associated receptors (TAARs) to elicit both intraspecific and interspecific innate behaviors. Ligand-binding causes a conformation change that triggers signaling via the G(s)-class of G-proteins which activate adenylate cyclase. May also be required to provide olfactory input into limbic brain areas to regulate emotional behaviors likely via modulation of the dopamine system. The polypeptide is Trace amine-associated receptor 2 (Mus musculus (Mouse)).